The chain runs to 518 residues: GMP synthase [glutamine-hydrolyzing] (518 aa).

Residues 6–200 form the Glutamine amidotransferase type-1 domain; the sequence is RLLIIDFGSQ…FVKLAGFKGD (195 aa). Cys-84 (nucleophile) is an active-site residue. Active-site residues include His-175 and Glu-177. The region spanning 201-393 is the GMPS ATP-PPase domain; it reads WTMGAYREEA…LGLPDSFIGR (193 aa). 228-234 serves as a coordination point for ATP; sequence SGGVDSS.

In terms of assembly, homodimer.

It carries out the reaction XMP + L-glutamine + ATP + H2O = GMP + L-glutamate + AMP + diphosphate + 2 H(+). Its pathway is purine metabolism; GMP biosynthesis; GMP from XMP (L-Gln route): step 1/1. Catalyzes the synthesis of GMP from XMP. In Cereibacter sphaeroides (strain ATCC 17025 / ATH 2.4.3) (Rhodobacter sphaeroides), this protein is GMP synthase [glutamine-hydrolyzing].